The sequence spans 92 residues: DNA/RNA-binding protein Alba (92 aa).

An N6-acetyllysine modification is found at Lys-11.

This sequence belongs to the histone-like Alba family. Post-translationally, acetylated. Acetylation at Lys-11 decreases DNA-binding affinity.

The protein resides in the cytoplasm. It localises to the chromosome. Its function is as follows. Binds double-stranded DNA tightly but without sequence specificity. Involved in DNA compaction. The chain is DNA/RNA-binding protein Alba from Pyrobaculum aerophilum (strain ATCC 51768 / DSM 7523 / JCM 9630 / CIP 104966 / NBRC 100827 / IM2).